Consider the following 410-residue polypeptide: Elongation factor Tu, chloroplastic (410 aa).

The tr-type G domain occupies 10 to 214 (KPHVNIGTIG…NVDEYIPTPE (205 aa)). Residues 19–26 (GHVDHGKT) are G1. Residue 19 to 26 (GHVDHGKT) coordinates GTP. Residue Thr26 coordinates Mg(2+). A G2 region spans residues 60-64 (GITIN). The interval 81 to 84 (DCPG) is G3. Residues 81–85 (DCPGH) and 136–139 (NKED) each bind GTP. The interval 136-139 (NKED) is G4. The tract at residues 174 to 176 (SAL) is G5.

It belongs to the TRAFAC class translation factor GTPase superfamily. Classic translation factor GTPase family. EF-Tu/EF-1A subfamily.

It is found in the plastid. Its subcellular location is the chloroplast stroma. It catalyses the reaction GTP + H2O = GDP + phosphate + H(+). Functionally, GTP hydrolase that promotes the GTP-dependent binding of aminoacyl-tRNA to the A-site of ribosomes during protein biosynthesis. This is Elongation factor Tu, chloroplastic (tufA) from Bigelowiella natans (Pedinomonas minutissima).